Consider the following 458-residue polypeptide: Glycine--tRNA ligase (458 aa).

Residues Arg-97 and Glu-171 each contribute to the substrate site. ATP is bound by residues 203–205 (RNE), 213–218 (FRTREF), 287–288 (EL), and 331–334 (GADR). 218–222 (FEQME) is a substrate binding site. 327–331 (EPSLG) is a binding site for substrate.

This sequence belongs to the class-II aminoacyl-tRNA synthetase family. In terms of assembly, homodimer.

It localises to the cytoplasm. The catalysed reaction is tRNA(Gly) + glycine + ATP = glycyl-tRNA(Gly) + AMP + diphosphate. Functionally, catalyzes the attachment of glycine to tRNA(Gly). The sequence is that of Glycine--tRNA ligase from Bacillus thuringiensis subsp. konkukian (strain 97-27).